The following is a 156-amino-acid chain: 6,7-dimethyl-8-ribityllumazine synthase (156 aa).

Residues Phe22, 57-59 (AYE), and 81-83 (TVI) contribute to the 5-amino-6-(D-ribitylamino)uracil site. Residue 86-87 (GT) participates in (2S)-2-hydroxy-3-oxobutyl phosphate binding. His89 acts as the Proton donor in catalysis. Phe114 is a binding site for 5-amino-6-(D-ribitylamino)uracil. Arg128 lines the (2S)-2-hydroxy-3-oxobutyl phosphate pocket.

The protein belongs to the DMRL synthase family. As to quaternary structure, forms an icosahedral capsid composed of 60 subunits, arranged as a dodecamer of pentamers.

The enzyme catalyses (2S)-2-hydroxy-3-oxobutyl phosphate + 5-amino-6-(D-ribitylamino)uracil = 6,7-dimethyl-8-(1-D-ribityl)lumazine + phosphate + 2 H2O + H(+). It participates in cofactor biosynthesis; riboflavin biosynthesis; riboflavin from 2-hydroxy-3-oxobutyl phosphate and 5-amino-6-(D-ribitylamino)uracil: step 1/2. In terms of biological role, catalyzes the formation of 6,7-dimethyl-8-ribityllumazine by condensation of 5-amino-6-(D-ribitylamino)uracil with 3,4-dihydroxy-2-butanone 4-phosphate. This is the penultimate step in the biosynthesis of riboflavin. The chain is 6,7-dimethyl-8-ribityllumazine synthase from Proteus mirabilis (strain HI4320).